A 263-amino-acid chain; its full sequence is Phosphoribosylaminoimidazole-succinocarboxamide synthase (263 aa).

The segment at methionine 239–histidine 263 is disordered.

Belongs to the SAICAR synthetase family.

The enzyme catalyses 5-amino-1-(5-phospho-D-ribosyl)imidazole-4-carboxylate + L-aspartate + ATP = (2S)-2-[5-amino-1-(5-phospho-beta-D-ribosyl)imidazole-4-carboxamido]succinate + ADP + phosphate + 2 H(+). Its pathway is purine metabolism; IMP biosynthesis via de novo pathway; 5-amino-1-(5-phospho-D-ribosyl)imidazole-4-carboxamide from 5-amino-1-(5-phospho-D-ribosyl)imidazole-4-carboxylate: step 1/2. This chain is Phosphoribosylaminoimidazole-succinocarboxamide synthase, found in Chelativorans sp. (strain BNC1).